A 244-amino-acid chain; its full sequence is Thiol S-methyltransferase TMT1A (244 aa).

The interval 1–28 is targeting to lipid droplets; it reads MELTIFILRLAIYILTFPLYLLNFLGLW. An N-terminal signal peptide occupies residues 1–29; sequence MELTIFILRLAIYILTFPLYLLNFLGLWS.

This sequence belongs to the methyltransferase superfamily. (Microbial infection) Interacts with HCV non-structural protein 4B/NS4B (via C-terminal region); this interaction may promote the recruitment of NS4B in the proximity of lipid droplet. In terms of assembly, self-associates. Interacts with SNRNP200; this interaction may promote the odontogenic differentiation. Methylated at lysine residues most likely by EZH2. Expressed in the liver.

Its subcellular location is the lipid droplet. The protein localises to the endoplasmic reticulum. The protein resides in the membrane. It is found in the microsome. It localises to the cytoplasm. Its subcellular location is the cytosol. It catalyses the reaction a thiol + S-adenosyl-L-methionine = a methyl thioether + S-adenosyl-L-homocysteine + H(+). The catalysed reaction is an adenosine in mRNA + S-adenosyl-L-methionine = an N(6)-methyladenosine in mRNA + S-adenosyl-L-homocysteine + H(+). Its activity is regulated as follows. Inhibited by 2,3-dichloro-alpha-methylbenzylamine (DCMB). Its function is as follows. Thiol S-methyltransferase that catalyzes the transfer of a methyl group from S-adenosyl-L-methionine to alkyl and phenolic thiol-containing acceptor substrates. Together with TMT1B accounts for most of S-thiol methylation activity in the endoplasmic reticulum of hepatocytes. Able to methylate the N6 position of adenosine residues in long non-coding RNAs (lncRNAs). May facilitate lncRNAs transfer into exosomes at the tumor-stroma interface. Promotes osteogenic and odontogenic differentiation by regulating the expression of genes involved in stem cell differentiation and survival. Targeted from the endoplasmic reticulum to lipid droplets, where it recruits cellular proteins to form functional organelles. In terms of biological role, (Microbial infection) May be involved in the assembly and release stages of hepatitis C virus (HCV) life cycle and thus play a crucial role in HCV propagation. The protein is Thiol S-methyltransferase TMT1A of Homo sapiens (Human).